The sequence spans 608 residues: ATP-binding protein Uup (608 aa).

ABC transporter domains follow at residues 7–217 (APVL…AADA) and 285–512 (VEAK…FAPV). ATP is bound by residues 42 to 49 (GRNGAGKS) and 317 to 324 (GPNGAGKT). The C-terminal domain (CTD), binds DNA stretch occupies residues 522–608 (AAPAAPKKSA…LEEKKENLAG (87 aa)).

It belongs to the ABC transporter superfamily. ABCF family. Uup subfamily.

The protein resides in the cytoplasm. It catalyses the reaction ATP + H2O = ADP + phosphate + H(+). Functionally, probably plays a role in ribosome assembly or function. May be involved in resolution of branched DNA intermediates that result from template switching in postreplication gaps. Binds DNA and has ATPase activity. Its function is as follows. One of a cluster of genes involved in attachment of the holdfast to the cell. The holdfast is a structure that allows the bacteria to firmly adhere to surfaces. This chain is ATP-binding protein Uup, found in Caulobacter vibrioides (strain ATCC 19089 / CIP 103742 / CB 15) (Caulobacter crescentus).